We begin with the raw amino-acid sequence, 1235 residues long: ATP-dependent helicase/nuclease subunit A (1235 aa).

The UvrD-like helicase ATP-binding domain maps to 3–471 (TKWTETQKSA…IKLSENFRSR (469 aa)). 24–31 (AGAGTGKT) is an ATP binding site. The 300-residue stretch at 509–808 (PFEGNCGGDV…RIMSIHKSKG (300 aa)) folds into the UvrD-like helicase C-terminal domain.

This sequence belongs to the helicase family. AddA subfamily. As to quaternary structure, heterodimer of AddA and AddB/RexB. The cofactor is Mg(2+).

It carries out the reaction Couples ATP hydrolysis with the unwinding of duplex DNA by translocating in the 3'-5' direction.. The enzyme catalyses ATP + H2O = ADP + phosphate + H(+). Its function is as follows. The heterodimer acts as both an ATP-dependent DNA helicase and an ATP-dependent, dual-direction single-stranded exonuclease. Recognizes the chi site generating a DNA molecule suitable for the initiation of homologous recombination. The AddA nuclease domain is required for chi fragment generation; this subunit has the helicase and 3' -&gt; 5' nuclease activities. This chain is ATP-dependent helicase/nuclease subunit A, found in Clostridium kluyveri (strain ATCC 8527 / DSM 555 / NBRC 12016 / NCIMB 10680 / K1).